We begin with the raw amino-acid sequence, 342 residues long: N-acetyl-gamma-glutamyl-phosphate reductase (342 aa).

Residue cysteine 149 is part of the active site.

The protein belongs to the NAGSA dehydrogenase family. Type 1 subfamily.

The protein localises to the cytoplasm. It carries out the reaction N-acetyl-L-glutamate 5-semialdehyde + phosphate + NADP(+) = N-acetyl-L-glutamyl 5-phosphate + NADPH + H(+). It functions in the pathway amino-acid biosynthesis; L-arginine biosynthesis; N(2)-acetyl-L-ornithine from L-glutamate: step 3/4. In terms of biological role, catalyzes the NADPH-dependent reduction of N-acetyl-5-glutamyl phosphate to yield N-acetyl-L-glutamate 5-semialdehyde. The protein is N-acetyl-gamma-glutamyl-phosphate reductase of Laribacter hongkongensis (strain HLHK9).